Here is a 175-residue protein sequence, read N- to C-terminus: FMRFamide-like neuropeptides 1 (175 aa).

A signal peptide spans 1–21 (MTLLYQVGLLLLVAATYKVSA). A propeptide spanning residues 22–68 (ECCTPGATSDFCTVFSMLSTMEQNEVMNFIGENCDGDAEVALQKMEK) is cleaved from the precursor. Tyrosine amide is present on tyrosine 76. A propeptide spanning residues 79 to 86 (SAAVKSLG) is cleaved from the precursor. Phenylalanine amide is present on residues phenylalanine 98, phenylalanine 108, phenylalanine 120, phenylalanine 130, phenylalanine 142, and phenylalanine 154. Residues 157–165 (SFDNFDRES) constitute a propeptide that is removed on maturation. A Phenylalanine amide modification is found at phenylalanine 173.

The protein belongs to the FARP (FMRFamide related peptide) family. In terms of processing, may be processed by convertase egl-3. In terms of tissue distribution, each flp gene is expressed in a distinct set of neurons. Flp-1 is expressed in the AVA interneurons, the M5 cholinergic pharyngeal motoneurons, and the AIA, AIY, AVE, AVK, RIG and RMG neurons.

It localises to the secreted. Functionally, together with flp-18, plays a homeostatic role by acting on the GABAergic neural transmission at neuromuscular junctions to prevent overexcitation of the locomotor circuit. Inhibits the activity of dissected pharyngeal myogenic muscle system. Its function is as follows. DPNFLRF-amide: Inhibits the activity of dissected pharyngeal myogenic muscle system. In terms of biological role, acts as a ligand for the npr-22 receptor in vitro. The polypeptide is FMRFamide-like neuropeptides 1 (flp-1) (Caenorhabditis elegans).